A 378-amino-acid polypeptide reads, in one-letter code: Flap endonuclease 1 (378 aa).

An N-domain region spans residues 1-105 (MGIKGLNSII…HELDKRTERR (105 aa)). Aspartate 34 is a Mg(2+) binding site. DNA contacts are provided by arginine 47 and arginine 71. 5 residues coordinate Mg(2+): aspartate 87, glutamate 156, glutamate 158, aspartate 177, and aspartate 179. The tract at residues 120–251 (EIMKHERRLV…VTALKLIKEH (132 aa)) is I-domain. Glutamate 156 provides a ligand contact to DNA. Residues glycine 229 and aspartate 231 each contribute to the DNA site. Residue aspartate 231 coordinates Mg(2+). Positions 337-345 (VQGRLDSFF) are interaction with PCNA. Positions 356–367 (AASARKAQAAKK) are enriched in low complexity. A disordered region spans residues 356–378 (AASARKAQAAKKTNQKGKVLKRR). The span at 368-378 (TNQKGKVLKRR) shows a compositional bias: basic residues.

It belongs to the XPG/RAD2 endonuclease family. FEN1 subfamily. Interacts with PCNA. Three molecules of FEN1 bind to one PCNA trimer with each molecule binding to one PCNA monomer. PCNA stimulates the nuclease activity without altering cleavage specificity. It depends on Mg(2+) as a cofactor. In terms of processing, phosphorylated. Phosphorylation upon DNA damage induces relocalization to the nuclear plasma.

The protein resides in the nucleus. It localises to the nucleolus. Its subcellular location is the nucleoplasm. The protein localises to the mitochondrion. Structure-specific nuclease with 5'-flap endonuclease and 5'-3' exonuclease activities involved in DNA replication and repair. During DNA replication, cleaves the 5'-overhanging flap structure that is generated by displacement synthesis when DNA polymerase encounters the 5'-end of a downstream Okazaki fragment. It enters the flap from the 5'-end and then tracks to cleave the flap base, leaving a nick for ligation. Also involved in the long patch base excision repair (LP-BER) pathway, by cleaving within the apurinic/apyrimidinic (AP) site-terminated flap. Acts as a genome stabilization factor that prevents flaps from equilibrating into structures that lead to duplications and deletions. Also possesses 5'-3' exonuclease activity on nicked or gapped double-stranded DNA, and exhibits RNase H activity. Also involved in replication and repair of rDNA and in repairing mitochondrial DNA. The polypeptide is Flap endonuclease 1 (Eremothecium gossypii (strain ATCC 10895 / CBS 109.51 / FGSC 9923 / NRRL Y-1056) (Yeast)).